The primary structure comprises 464 residues: Argininosuccinate lyase (464 aa).

Belongs to the lyase 1 family. Argininosuccinate lyase subfamily.

It is found in the cytoplasm. It catalyses the reaction 2-(N(omega)-L-arginino)succinate = fumarate + L-arginine. The protein operates within amino-acid biosynthesis; L-arginine biosynthesis; L-arginine from L-ornithine and carbamoyl phosphate: step 3/3. The protein is Argininosuccinate lyase of Azotobacter vinelandii (strain DJ / ATCC BAA-1303).